The sequence spans 455 residues: Pup--protein ligase (455 aa).

Glu10 contacts Mg(2+). Arg55 provides a ligand contact to ATP. Residue Tyr57 participates in Mg(2+) binding. The Proton acceptor role is filled by Asp59. Glu65 contributes to the Mg(2+) binding site. Thr68 and Trp422 together coordinate ATP.

This sequence belongs to the Pup ligase/Pup deamidase family. Pup-conjugating enzyme subfamily.

The catalysed reaction is ATP + [prokaryotic ubiquitin-like protein]-L-glutamate + [protein]-L-lysine = ADP + phosphate + N(6)-([prokaryotic ubiquitin-like protein]-gamma-L-glutamyl)-[protein]-L-lysine.. It participates in protein degradation; proteasomal Pup-dependent pathway. The protein operates within protein modification; protein pupylation. Catalyzes the covalent attachment of the prokaryotic ubiquitin-like protein modifier Pup to the proteasomal substrate proteins, thereby targeting them for proteasomal degradation. This tagging system is termed pupylation. The ligation reaction involves the side-chain carboxylate of the C-terminal glutamate of Pup and the side-chain amino group of a substrate lysine. This Sanguibacter keddieii (strain ATCC 51767 / DSM 10542 / NCFB 3025 / ST-74) protein is Pup--protein ligase.